The chain runs to 305 residues: Methionyl-tRNA formyltransferase (305 aa).

(6S)-5,6,7,8-tetrahydrofolate is bound at residue 109 to 112; it reads SLLP.

Belongs to the Fmt family.

It catalyses the reaction L-methionyl-tRNA(fMet) + (6R)-10-formyltetrahydrofolate = N-formyl-L-methionyl-tRNA(fMet) + (6S)-5,6,7,8-tetrahydrofolate + H(+). Its function is as follows. Attaches a formyl group to the free amino group of methionyl-tRNA(fMet). The formyl group appears to play a dual role in the initiator identity of N-formylmethionyl-tRNA by promoting its recognition by IF2 and preventing the misappropriation of this tRNA by the elongation apparatus. The sequence is that of Methionyl-tRNA formyltransferase from Roseobacter denitrificans (strain ATCC 33942 / OCh 114) (Erythrobacter sp. (strain OCh 114)).